The sequence spans 625 residues: MDFDSPEEKEFPGLYASEAADAKSRKSKEESDFSEDHDHSKKDLLIGRRKDKKEKGKDRGYAALEGESSPEEELDTKSPSKSKKSKTFKFTSSKSKEKREKSRDKSEKDSKHAEEEPSVSHKVKEKERDKEKDRDEPKKKDKEEKRKEKDKKADKKDKKDKKSKQLSQQQDDVSAAEEVLALGYPVFGVSVSLATERSRCHDGVDIPLVVRDCIDFLQDHLKCEQIYKIEPIKTRLMHFKRLYNNREHDSAVDELNLPTACSLLKLFLRELPEPLLTTDLVARFEEVASHPKVTTQQAELQQLLEQLPKCNRTLLAWVLLHFDAVIQQERHNKLNAQSLAMLLSPTLQMSHRLMVALLCHCNNLFADVQLIKYVPPLTSTSPKLPDTPEDIQTELRKQDSLLSQIHSEMNAGFITKKREEQLWEVQRIITQLKRKLRTFEKKQEKTAEEVDNSSSAPPAVASEDTTDSKPAGTPAVSTNNSISQEEPKTDTLTPKDAPNDFTIDPSTGFILLPKSNPHRENLLRLQIEYDELMEWQNELKARIVAERNEVYRLKQLYEQQSINSQMASLASGSQAPPESDYERIIEHYTRENALLEHKKNMLGMELKEERRACIALQVELRLQQF.

Composition is skewed to basic and acidic residues over residues 1 to 11 and 20 to 60; these read MDFDSPEEKEF and ADAK…KDRG. The segment at 1 to 172 is disordered; sequence MDFDSPEEKE…SKQLSQQQDD (172 aa). Phosphoserine is present on residues S68 and S69. Over residues 94 to 157 the composition is skewed to basic and acidic residues; sequence KSKEKREKSR…EKDKKADKKD (64 aa). One can recognise a Rho-GAP domain in the interval 191 to 385; it reads VSLATERSRC…PLTSTSPKLP (195 aa). The interval 443–500 is disordered; the sequence is QEKTAEEVDNSSSAPPAVASEDTTDSKPAGTPAVSTNNSISQEEPKTDTLTPKDAPND. The span at 475-484 shows a compositional bias: polar residues; it reads AVSTNNSISQ.

In terms of assembly, interacts with CycB and numb.

Participates in receptor endocytosis during interphase, is also involved in mitotic processes when endocytosis is switched off. The polypeptide is RalA-binding protein 1 (Drosophila melanogaster (Fruit fly)).